Consider the following 424-residue polypeptide: 3-phosphoshikimate 1-carboxyvinyltransferase (424 aa).

3 residues coordinate 3-phosphoshikimate: K21, S22, and R26. K21 contacts phosphoenolpyruvate. The phosphoenolpyruvate site is built by G91 and R119. Residues S164, Q166, D310, and K337 each coordinate 3-phosphoshikimate. Residue Q166 coordinates phosphoenolpyruvate. D310 functions as the Proton acceptor in the catalytic mechanism. Residues R341 and R382 each coordinate phosphoenolpyruvate.

Belongs to the EPSP synthase family. As to quaternary structure, monomer.

The protein resides in the cytoplasm. The enzyme catalyses 3-phosphoshikimate + phosphoenolpyruvate = 5-O-(1-carboxyvinyl)-3-phosphoshikimate + phosphate. It functions in the pathway metabolic intermediate biosynthesis; chorismate biosynthesis; chorismate from D-erythrose 4-phosphate and phosphoenolpyruvate: step 6/7. Its function is as follows. Catalyzes the transfer of the enolpyruvyl moiety of phosphoenolpyruvate (PEP) to the 5-hydroxyl of shikimate-3-phosphate (S3P) to produce enolpyruvyl shikimate-3-phosphate and inorganic phosphate. This is 3-phosphoshikimate 1-carboxyvinyltransferase from Campylobacter hominis (strain ATCC BAA-381 / DSM 21671 / CCUG 45161 / LMG 19568 / NCTC 13146 / CH001A).